A 957-amino-acid polypeptide reads, in one-letter code: MTQTLSQLENSGAFIERHIGPDAAQQQEMLNAVGAQSLNALTGQIVPKDIQLATPPQVGAPATEYAALAELKAIASRNKRFTSYIGMGYTAVQLPPVILRNMLENPGWYTAYTPYQPEVSQGRLEALLNFQQVTLDLTGLDMASASLLDEATAAAEAMAMAKRVSKLKNANRFFVASDVHPQTLDVVRTRAETFGFEVIVDDAQKVLDHQDVFGVLLQQVGTTGEIHDYTALISELKSRKIVVSVAADIMALVLLTAPGKQGADIVFGSAQRFGVPMGYGGPHAAFFAAKDEYKRSMPGRIIGVSKDAAGNTALRMAMQTREQHIRREKANSNICTSQVLLANIASLYAVYHGPVGLKRIANRIHRLTDILAAGLQQKGLKLRHAHYFDTLCVEVADKAGVLARAEAAEINLRSDILNAVGITLDETTTRENVMQLFSVLLGDNHGLDIDTLDKDVAHDSRSIQPAMLRDDEILTHPVFNRYHSETEMMRYMHSLERKDLALNQAMIPLGSCTMKLNAAAEMIPITWSEFAELHPFCPPEQAEGYQQMIAQLADWLVKLTGYDAVCMQPNSGAQGEYAGLLAIRHYHESRNEGHRDICLIPASAHGTNPASAHMAGMQVVVVACDKNGNIDLADLRAKAEQAGDNLSCIMVTYPSTHGVYEETIREVCEVVHQFGGQVYLDGANMNAQVGITSPGFIGADVSHLNLHKTFCIPHGGGGPGMGPIGVKAHLAPFVPGHSVVQIEGMLTRQGAVSAAPFGSASILPISWMYIRMMGAEGLKKASQVAILNANYIASRLQDAFPVLYTGRDGRVAHECILDIRPLKEETGISELDIAKRLIDYGFHAPTMSFPVAGTLMVEPTESESKVELDRFIDAMLAIRAEIDQVKAGVWPLEDNPLVNAPHIQSELVAEWAHPYSREVAVFPAGVADKYWPTVKRLDDVYGDRNLFCSCVPISEYQ.

Residue Lys708 is modified to N6-(pyridoxal phosphate)lysine.

Belongs to the GcvP family. As to quaternary structure, the glycine cleavage system is composed of four proteins: P, T, L and H. Pyridoxal 5'-phosphate serves as cofactor.

The catalysed reaction is N(6)-[(R)-lipoyl]-L-lysyl-[glycine-cleavage complex H protein] + glycine + H(+) = N(6)-[(R)-S(8)-aminomethyldihydrolipoyl]-L-lysyl-[glycine-cleavage complex H protein] + CO2. Functionally, the glycine cleavage system catalyzes the degradation of glycine. The P protein binds the alpha-amino group of glycine through its pyridoxal phosphate cofactor; CO(2) is released and the remaining methylamine moiety is then transferred to the lipoamide cofactor of the H protein. The chain is Glycine dehydrogenase (decarboxylating) from Escherichia coli O17:K52:H18 (strain UMN026 / ExPEC).